Reading from the N-terminus, the 344-residue chain is Biotin synthase (344 aa).

Residues 40–267 enclose the Radical SAM core domain; that stretch reads AEVQVSTLLS…KSMVRLSAGR (228 aa). Positions 55, 59, and 62 each coordinate [4Fe-4S] cluster. [2Fe-2S] cluster contacts are provided by C99, C130, C190, and R262.

It belongs to the radical SAM superfamily. Biotin synthase family. In terms of assembly, homodimer. The cofactor is [4Fe-4S] cluster. [2Fe-2S] cluster serves as cofactor.

The catalysed reaction is (4R,5S)-dethiobiotin + (sulfur carrier)-SH + 2 reduced [2Fe-2S]-[ferredoxin] + 2 S-adenosyl-L-methionine = (sulfur carrier)-H + biotin + 2 5'-deoxyadenosine + 2 L-methionine + 2 oxidized [2Fe-2S]-[ferredoxin]. It participates in cofactor biosynthesis; biotin biosynthesis; biotin from 7,8-diaminononanoate: step 2/2. Catalyzes the conversion of dethiobiotin (DTB) to biotin by the insertion of a sulfur atom into dethiobiotin via a radical-based mechanism. This chain is Biotin synthase, found in Xanthomonas campestris pv. campestris (strain 8004).